A 79-amino-acid chain; its full sequence is uncharacterized protein (79 aa).

The stretch at 4-43 (QENEDLRKQLVEASELLKSQAKELKDAHQQQKLALQDFLE) forms a coiled coil.

This is an uncharacterized protein from Homo sapiens (Human).